Here is a 342-residue protein sequence, read N- to C-terminus: Phenylalanine--tRNA ligase alpha subunit (342 aa).

Glutamate 260 contacts Mg(2+).

It belongs to the class-II aminoacyl-tRNA synthetase family. Phe-tRNA synthetase alpha subunit type 1 subfamily. Tetramer of two alpha and two beta subunits. The cofactor is Mg(2+).

The protein resides in the cytoplasm. It catalyses the reaction tRNA(Phe) + L-phenylalanine + ATP = L-phenylalanyl-tRNA(Phe) + AMP + diphosphate + H(+). The protein is Phenylalanine--tRNA ligase alpha subunit of Nocardia farcinica (strain IFM 10152).